A 144-amino-acid chain; its full sequence is Putative pre-16S rRNA nuclease (144 aa).

This sequence belongs to the YqgF nuclease family.

It localises to the cytoplasm. Its function is as follows. Could be a nuclease involved in processing of the 5'-end of pre-16S rRNA. This is Putative pre-16S rRNA nuclease from Prochlorococcus marinus (strain NATL1A).